The following is a 433-amino-acid chain: F-box only protein 15 (433 aa).

One can recognise an F-box domain in the interval 1–41 (MPSEILVKILSYLDAVTLVCIGCVSRRFYHLADDNLIWVRK).

As to quaternary structure, directly interacts with SKP1 and CUL1. Expressed in testis.

In terms of biological role, substrate-recognition component of the SCF (SKP1-CUL1-F-box protein)-type E3 ubiquitin ligase complex. This Mus musculus (Mouse) protein is F-box only protein 15 (Fbxo15).